A 467-amino-acid chain; its full sequence is MSPQTETKASVGFKAGVKDYKLTYYTPDYETKDTDILAAFRVTPQPGVPPEEAGAAVAAESSTGTWTTVWTDGLTSLDRYKGRCYHTETVVGEENQYIAYVAYPLDLFEEGSVTNMFTSIVGNVFGFKALRALRLEDLRIPTSYSKTFQGPPHGIQVERDKLNKYGRPLLGCTIKPKLGLSAKNYGRAVYECLRGGLDFTKDDENVNSQPFMRWRDRFLFCAEAIYKAQAETGEIKGHYLNATAGTCEEMIKRAVFARELGVPIVMHDYLTGGFTANTSLAHYCRDNGLLLHIHRAMHAVIDRQKNHGMHFRVLAKALRMSGGDHIHAGTVVGKLEGEREMTLGFVDLLRDDFIEKDRSRGIFFTQDWVSMPGVIPVASGGIHVWHMPALTEIFGDDSVLQFGGGTLGHPWGNAPGAVANRVALEACVQARNEGRDLAREGNEIIREASKWSPELASACEVWKEIKF.

Positions 1-2 are excised as a propeptide; it reads MS. Pro3 carries the N-acetylproline modification. Lys14 is subject to N6,N6,N6-trimethyllysine. Substrate contacts are provided by Asn123 and Thr173. The Proton acceptor role is filled by Lys175. Lys177 serves as a coordination point for substrate. 3 residues coordinate Mg(2+): Lys201, Asp203, and Glu204. Lys201 carries the N6-carboxylysine modification. The Proton acceptor role is filled by His294. Substrate contacts are provided by Arg295, His327, and Ser379.

It belongs to the RuBisCO large chain family. Type I subfamily. In terms of assembly, heterohexadecamer of 8 large chains and 8 small chains; disulfide-linked. The disulfide link is formed within the large subunit homodimers. Mg(2+) serves as cofactor. Post-translationally, the disulfide bond which can form in the large chain dimeric partners within the hexadecamer appears to be associated with oxidative stress and protein turnover.

It is found in the plastid. It localises to the chloroplast. It carries out the reaction 2 (2R)-3-phosphoglycerate + 2 H(+) = D-ribulose 1,5-bisphosphate + CO2 + H2O. It catalyses the reaction D-ribulose 1,5-bisphosphate + O2 = 2-phosphoglycolate + (2R)-3-phosphoglycerate + 2 H(+). Its function is as follows. RuBisCO catalyzes two reactions: the carboxylation of D-ribulose 1,5-bisphosphate, the primary event in carbon dioxide fixation, as well as the oxidative fragmentation of the pentose substrate in the photorespiration process. Both reactions occur simultaneously and in competition at the same active site. This is Ribulose bisphosphate carboxylase large chain from Serenoa repens (Saw palmetto).